The following is a 133-amino-acid chain: ATP synthase epsilon chain, chloroplastic (133 aa).

Belongs to the ATPase epsilon chain family. In terms of assembly, F-type ATPases have 2 components, CF(1) - the catalytic core - and CF(0) - the membrane proton channel. CF(1) has five subunits: alpha(3), beta(3), gamma(1), delta(1), epsilon(1). CF(0) has three main subunits: a, b and c.

The protein localises to the plastid. The protein resides in the chloroplast thylakoid membrane. Functionally, produces ATP from ADP in the presence of a proton gradient across the membrane. The protein is ATP synthase epsilon chain, chloroplastic of Eucalyptus globulus subsp. globulus (Tasmanian blue gum).